Here is a 435-residue protein sequence, read N- to C-terminus: 3-phosphoshikimate 1-carboxyvinyltransferase (435 aa).

3 residues coordinate 3-phosphoshikimate: Lys22, Ser23, and Arg27. Lys22 contributes to the phosphoenolpyruvate binding site. Phosphoenolpyruvate-binding residues include Gly95 and Arg123. Residues Ser168, Gln170, Asp319, and Lys346 each coordinate 3-phosphoshikimate. Gln170 lines the phosphoenolpyruvate pocket. The Proton acceptor role is filled by Asp319. Residues Arg350 and Arg393 each coordinate phosphoenolpyruvate.

This sequence belongs to the EPSP synthase family. As to quaternary structure, monomer.

The protein resides in the cytoplasm. The catalysed reaction is 3-phosphoshikimate + phosphoenolpyruvate = 5-O-(1-carboxyvinyl)-3-phosphoshikimate + phosphate. The protein operates within metabolic intermediate biosynthesis; chorismate biosynthesis; chorismate from D-erythrose 4-phosphate and phosphoenolpyruvate: step 6/7. Catalyzes the transfer of the enolpyruvyl moiety of phosphoenolpyruvate (PEP) to the 5-hydroxyl of shikimate-3-phosphate (S3P) to produce enolpyruvyl shikimate-3-phosphate and inorganic phosphate. The chain is 3-phosphoshikimate 1-carboxyvinyltransferase from Chloroflexus aurantiacus (strain ATCC 29364 / DSM 637 / Y-400-fl).